A 550-amino-acid chain; its full sequence is QDLPGTDNSTATLCLGHHAVPNGTIVKTITDDQIEVTNATELVQSSSTGKICNNPHKILDGIDCTLIDALLGDPHCDVFQDETWDLFVERSNAFSNCYPYDVPDYASLRSLVASSGTLEFITEGFTWTGVTQNGGSNACKRGPANGFFSRLNWLTKSGSTYPVLNVTMPNNDNSDKLYIWGVHHPSTNQEQTNLYVQASGRVTVSTKRSQQTMIPNAGSRPWVRGLSSRISIYWTIVKPGDILVINSNGNLIAPRGYFKMRTGKSSIMRSDAPIGTCSSECITPNGSIPNDKPFQNVNKITYGACPKYVKQNTLKLATGMRNVPEKQTRGLFGAIAGFIENGWEGMIDGWYGFRHQNSEGTGQAADLKSTQAAIDLINGKVNRVIEKTNEKFHQIEKEFSEVEGRIQDLEKYVEDTKIDLWSYNADVLVALENQHTIDLTDSEMNKLFEKTRRQLRENAEDMGNGCFKIYHKCDNACIESIRNGTYDHDIYRDEALNNRFQIKGVELKSGYKDWILWISFAISCFLLCVVLLGFIMWACQRGNIRCNICI.

Residues 1–514 (QDLPGTDNST…VELKSGYKDW (514 aa)) are Extracellular-facing. Residues Asn8, Asn22, and Asn38 are each glycosylated (N-linked (GlcNAc...) asparagine; by host). 6 cysteine pairs are disulfide-bonded: Cys14–Cys466, Cys52–Cys277, Cys64–Cys76, Cys97–Cys139, Cys281–Cys305, and Cys473–Cys477. Residues Asn165 and Asn285 are each glycosylated (N-linked (GlcNAc...) asparagine; by host). Asn483 is a glycosylation site (N-linked (GlcNAc...) asparagine; by host). A helical transmembrane segment spans residues 515 to 535 (ILWISFAISCFLLCVVLLGFI). The Cytoplasmic segment spans residues 536 to 550 (MWACQRGNIRCNICI). 3 S-palmitoyl cysteine; by host lipidation sites follow: Cys539, Cys546, and Cys549.

The protein belongs to the influenza viruses hemagglutinin family. Homotrimer of disulfide-linked HA1-HA2. In terms of processing, palmitoylated. In natural infection, inactive HA is matured into HA1 and HA2 outside the cell by one or more trypsin-like, arginine-specific endoprotease secreted by the bronchial epithelial cells. One identified protease that may be involved in this process is secreted in lungs by club cells.

It localises to the virion membrane. The protein localises to the host apical cell membrane. In terms of biological role, binds to sialic acid-containing receptors on the cell surface, bringing about the attachment of the virus particle to the cell. This attachment induces virion internalization either through clathrin-dependent endocytosis or through clathrin- and caveolin-independent pathway. Plays a major role in the determination of host range restriction and virulence. Class I viral fusion protein. Responsible for penetration of the virus into the cell cytoplasm by mediating the fusion of the membrane of the endocytosed virus particle with the endosomal membrane. Low pH in endosomes induces an irreversible conformational change in HA2, releasing the fusion hydrophobic peptide. Several trimers are required to form a competent fusion pore. The chain is Hemagglutinin from Aves (whales).